The following is a 164-amino-acid chain: UPF0304 protein ECA3037 (164 aa).

Belongs to the UPF0304 family.

The protein is UPF0304 protein ECA3037 of Pectobacterium atrosepticum (strain SCRI 1043 / ATCC BAA-672) (Erwinia carotovora subsp. atroseptica).